The chain runs to 364 residues: Dermonecrotic toxin SPH (364 aa).

Positions 1-17 are cleaved as a signal peptide; the sequence is MIRIFALITALAITVKC. The active-site Nucleophile is His-29. Positions 49 and 51 each coordinate Mg(2+). Residue His-65 is part of the active site. Intrachain disulfides connect Cys-69/Cys-75 and Cys-71/Cys-215. Asp-109 lines the Mg(2+) pocket.

This sequence belongs to the arthropod phospholipase D family. It depends on Mg(2+) as a cofactor. As to expression, expressed in salivary glands.

The protein resides in the secreted. The enzyme catalyses an N-(acyl)-sphingosylphosphocholine = an N-(acyl)-sphingosyl-1,3-cyclic phosphate + choline. It carries out the reaction an N-(acyl)-sphingosylphosphoethanolamine = an N-(acyl)-sphingosyl-1,3-cyclic phosphate + ethanolamine. It catalyses the reaction a 1-acyl-sn-glycero-3-phosphocholine = a 1-acyl-sn-glycero-2,3-cyclic phosphate + choline. The catalysed reaction is a 1-acyl-sn-glycero-3-phosphoethanolamine = a 1-acyl-sn-glycero-2,3-cyclic phosphate + ethanolamine. Functionally, dermonecrotic toxins cleave the phosphodiester linkage between the phosphate and headgroup of certain phospholipids (sphingolipid and lysolipid substrates), forming an alcohol (often choline) and a cyclic phosphate. Acts on sphingomyelin (SM). It may also act on ceramide phosphoethanolamine (CPE), lysophosphatidylcholine (LPC) and lysophosphatidylethanolamine (LPE), but not on lysophosphatidylserine (LPS), and lysophosphatidylglycerol (LPG). It acts by transphosphatidylation, releasing exclusively cyclic phosphate products as second products. Induces dermonecrosis, hemolysis, increased vascular permeability, edema, inflammatory response, and platelet aggregation. In Ixodes scapularis (Black-legged tick), this protein is Dermonecrotic toxin SPH (SPH).